A 261-amino-acid chain; its full sequence is 5'-nucleotidase SurE (261 aa).

A divalent metal cation is bound by residues Asp8, Asp9, Ser39, and Asn94.

The protein belongs to the SurE nucleotidase family. The cofactor is a divalent metal cation.

Its subcellular location is the cytoplasm. It carries out the reaction a ribonucleoside 5'-phosphate + H2O = a ribonucleoside + phosphate. Nucleotidase that shows phosphatase activity on nucleoside 5'-monophosphates. The sequence is that of 5'-nucleotidase SurE from Archaeoglobus fulgidus (strain ATCC 49558 / DSM 4304 / JCM 9628 / NBRC 100126 / VC-16).